A 219-amino-acid chain; its full sequence is Large ribosomal subunit protein uL1 (219 aa).

This sequence belongs to the universal ribosomal protein uL1 family. As to quaternary structure, part of the 50S ribosomal subunit.

Its function is as follows. Probably involved in E site tRNA release. Binds directly to 23S rRNA. Protein L1 is also a translational repressor protein, it controls the translation of its operon by binding to its mRNA. This chain is Large ribosomal subunit protein uL1, found in Methanocaldococcus jannaschii (strain ATCC 43067 / DSM 2661 / JAL-1 / JCM 10045 / NBRC 100440) (Methanococcus jannaschii).